The primary structure comprises 180 residues: MASTVSAYKEKMKELSVLSLICSCFYSQPHPNTIYQYGDMEVKQLDKRASGQSFEVILKSPSDLSPESPVLSSPPKRKDASLEELQKRLEAAEERRKTQEAQVLKQLAERREHEREVLHKALEENNNFSPLAEEKLNYKMELSKEIREAHLAALRERLREKELHAAEVRRNKEQREEMSG.

Residues Cys-22 and Cys-24 are each lipidated (S-palmitoyl cysteine). Residues 38-180 (GDMEVKQLDK…NKEQREEMSG (143 aa)) form the SLD domain. Phosphoserine is present on residues Ser-50, Ser-60, Ser-65, Ser-68, Ser-72, Ser-73, and Ser-81. The disordered stretch occupies residues 58–81 (LKSPSDLSPESPVLSSPPKRKDAS). Positions 60-74 (SPSDLSPESPVLSSP) are enriched in low complexity. A coiled-coil region spans residues 75 to 179 (PKRKDASLEE…RNKEQREEMS (105 aa)).

Belongs to the stathmin family. In terms of assembly, interacts with STAT3. Interacts with CLU (secreted form); this interaction may act as an important modulator during neuronal differentiation. Post-translationally, N-terminal palmitoylation promotes specific anchoring to the cytosolic leaflet of Golgi membranes and subsequent vesicular trafficking along dendrites and axons. Neuronal Stathmins are substrates for palmitoyltransferases ZDHHC3, ZDHHC7 and ZDHHC15. Neuron specific.

Its subcellular location is the golgi apparatus. It is found in the cell projection. It localises to the growth cone. The protein resides in the axon. The protein localises to the cytoplasm. Its subcellular location is the cytosol. Functionally, exhibits microtubule-destabilizing activity, which is antagonized by STAT3. The sequence is that of Stathmin-3 (Stmn3) from Rattus norvegicus (Rat).